The primary structure comprises 69 residues: Antimicrobial peptide Meucin-18 (69 aa).

Positions 1-16 (MVIFLAYFLVVNESEA) are cleaved as a signal peptide. A propeptide spanning residues 38–69 (ERSVMNRDLENLFDPYQRNLEMDRLLKQLRNY) is cleaved from the precursor.

This sequence belongs to the non-disulfide-bridged peptide (NDBP) superfamily. Medium-length antimicrobial peptide (group 3) family. As to expression, expressed by the venom gland.

Its subcellular location is the secreted. It is found in the target cell membrane. In terms of biological role, amphipathic peptide that exhibits extensive cytolytic activities against both prokaryotic and eukaryotic cells. Acts by fastly disrupting the bacterial membrane. Is more potent against Gram-positive bacteria than against Gram-negative bacteria, and fungi (LC=25.1-8.3 uM). Shows potent activity against penicillin (MIC=3.0 uM) and methicillin (MIC=1.5-3.0 uM) resistant bacteria. Is lethal to the fungus Beauveria sp (LC=1.9 uM), a highly lethal pathogenic fungus to insects and resistant to many AMPs. Shows hemolytic activity against rabbit erythrocytes (37.7% of inhibition at 6.25 uM) and cytolysis against rat dorsal root ganglions. May act by disrupting the integrity of the bacterial cell membrane. Antibiotic activity is not affected by major negatively charged components of the prokaryotic cell wall (e.g. lipopolysaccharides and lipoteichoic acid). In vivo, intravenous injection into mice tail provokes uncomfortable symptoms with a death rate of 12.5%. In vivo, in a mouse model of lethal peritonitis, shows potent antibiotic activity without cytotoxicity, improving the survival rate. This is Antimicrobial peptide Meucin-18 from Mesobuthus eupeus (Lesser Asian scorpion).